The following is a 309-amino-acid chain: Isopentenyl-diphosphate Delta-isomerase II (309 aa).

Position 112 (Lys112) interacts with substrate. Residues His116 and His128 each coordinate Mg(2+). The region spanning 126–278 (LLHRAFSVFL…GLKLSPWFRL (153 aa)) is the Nudix hydrolase domain. Substrate-binding residues include Arg147 and Lys151. The active site involves Cys163. Substrate is bound at residue Ser164. Mg(2+)-binding residues include Glu223 and Glu225. Glu225 is a catalytic residue.

It belongs to the IPP isomerase type 1 family. Mg(2+) serves as cofactor.

The catalysed reaction is isopentenyl diphosphate = dimethylallyl diphosphate. The protein operates within isoprenoid biosynthesis; dimethylallyl diphosphate biosynthesis; dimethylallyl diphosphate from isopentenyl diphosphate: step 1/1. It functions in the pathway porphyrin-containing compound metabolism; chlorophyll biosynthesis. Its function is as follows. Catalyzes the 1,3-allylic rearrangement of the homoallylic substrate isopentenyl (IPP) to its highly electrophilic allylic isomer, dimethylallyl diphosphate (DMAPP). The sequence is that of Isopentenyl-diphosphate Delta-isomerase II (IPI2) from Camptotheca acuminata (Happy tree).